The following is a 311-amino-acid chain: 2-methoxy-6-polyprenyl-1,4-benzoquinol methylase, mitochondrial (311 aa).

The transit peptide at 1 to 29 (MAAGLCPGRALLSRRGGALWALLGTARGR) directs the protein to the mitochondrion. Residues threonine 100, aspartate 155, and 183 to 184 (NA) each bind S-adenosyl-L-methionine.

This sequence belongs to the class I-like SAM-binding methyltransferase superfamily. MenG/UbiE family. Component of a multi-subunit COQ enzyme complex, composed of at least COQ3, COQ4, COQ5, COQ6, COQ7 and COQ9.

It is found in the mitochondrion inner membrane. The catalysed reaction is a 2-methoxy-6-(all-trans-polyprenyl)benzene-1,4-diol + S-adenosyl-L-methionine = a 5-methoxy-2-methyl-3-(all-trans-polyprenyl)benzene-1,4-diol + S-adenosyl-L-homocysteine + H(+). It functions in the pathway cofactor biosynthesis; ubiquinone biosynthesis. Functionally, methyltransferase required for the conversion of 2-polyprenyl-6-methoxy-1,4-benzoquinol (DDMQH2) to 2-polyprenyl-3-methyl-6-methoxy-1,4-benzoquinol (DMQH2). The sequence is that of 2-methoxy-6-polyprenyl-1,4-benzoquinol methylase, mitochondrial from Gallus gallus (Chicken).